Consider the following 317-residue polypeptide: Porphobilinogen deaminase (317 aa).

Cys-240 bears the S-(dipyrrolylmethanemethyl)cysteine mark.

This sequence belongs to the HMBS family. In terms of assembly, monomer. Requires dipyrromethane as cofactor.

The enzyme catalyses 4 porphobilinogen + H2O = hydroxymethylbilane + 4 NH4(+). It functions in the pathway porphyrin-containing compound metabolism; protoporphyrin-IX biosynthesis; coproporphyrinogen-III from 5-aminolevulinate: step 2/4. Tetrapolymerization of the monopyrrole PBG into the hydroxymethylbilane pre-uroporphyrinogen in several discrete steps. The sequence is that of Porphobilinogen deaminase from Nitratidesulfovibrio vulgaris (strain DSM 19637 / Miyazaki F) (Desulfovibrio vulgaris).